Reading from the N-terminus, the 413-residue chain is Multidrug resistance protein MdtA (413 aa).

The first 32 residues, 1–32 (MNAKRIRGLLIFAAVIAIAVLIWRHFTQTSPA), serve as a signal peptide directing secretion. The span at 32-46 (AAPGTSEQHAARTSH) shows a compositional bias: polar residues. The tract at residues 32–59 (AAPGTSEQHAARTSHSGNNSSGNGGGRR) is disordered.

This sequence belongs to the membrane fusion protein (MFP) (TC 8.A.1) family. In terms of assembly, part of a tripartite efflux system composed of MdtA, MdtB and MdtC.

Its subcellular location is the cell inner membrane. This chain is Multidrug resistance protein MdtA, found in Pectobacterium carotovorum subsp. carotovorum (strain PC1).